Reading from the N-terminus, the 136-residue chain is uncharacterized protein (136 aa).

Residues 74–97 (RADPGRKGRTQPLPTQGSARRFLH) are disordered.

This is an uncharacterized protein from Saccharomyces cerevisiae (strain ATCC 204508 / S288c) (Baker's yeast).